The following is a 235-amino-acid chain: Leucyl/phenylalanyl-tRNA--protein transferase (235 aa).

This sequence belongs to the L/F-transferase family.

The protein localises to the cytoplasm. The catalysed reaction is N-terminal L-lysyl-[protein] + L-leucyl-tRNA(Leu) = N-terminal L-leucyl-L-lysyl-[protein] + tRNA(Leu) + H(+). The enzyme catalyses N-terminal L-arginyl-[protein] + L-leucyl-tRNA(Leu) = N-terminal L-leucyl-L-arginyl-[protein] + tRNA(Leu) + H(+). It catalyses the reaction L-phenylalanyl-tRNA(Phe) + an N-terminal L-alpha-aminoacyl-[protein] = an N-terminal L-phenylalanyl-L-alpha-aminoacyl-[protein] + tRNA(Phe). Functions in the N-end rule pathway of protein degradation where it conjugates Leu, Phe and, less efficiently, Met from aminoacyl-tRNAs to the N-termini of proteins containing an N-terminal arginine or lysine. This is Leucyl/phenylalanyl-tRNA--protein transferase from Magnetococcus marinus (strain ATCC BAA-1437 / JCM 17883 / MC-1).